We begin with the raw amino-acid sequence, 242 residues long: Probable 2-phosphosulfolactate phosphatase (242 aa).

The protein belongs to the ComB family. Mg(2+) serves as cofactor.

It catalyses the reaction (2R)-O-phospho-3-sulfolactate + H2O = (2R)-3-sulfolactate + phosphate. The polypeptide is Probable 2-phosphosulfolactate phosphatase (Parasynechococcus marenigrum (strain WH8102)).